The chain runs to 55 residues: Sec-independent protein translocase protein TatA (55 aa).

Residues 1–21 form a helical membrane-spanning segment; it reads MSLGPWQLFLVLIIILVLFGA.

This sequence belongs to the TatA/E family. The Tat system comprises two distinct complexes: a TatABC complex, containing multiple copies of TatA, TatB and TatC subunits, and a separate TatA complex, containing only TatA subunits. Substrates initially bind to the TatABC complex, which probably triggers association of the separate TatA complex to form the active translocon.

The protein resides in the cell membrane. Its function is as follows. Part of the twin-arginine translocation (Tat) system that transports large folded proteins containing a characteristic twin-arginine motif in their signal peptide across membranes. TatA could form the protein-conducting channel of the Tat system. The chain is Sec-independent protein translocase protein TatA from Wolbachia pipientis wMel.